The sequence spans 434 residues: Cyclic 2,3-diphosphoglycerate synthetase (434 aa).

The protein belongs to the cyclic 2,3-diphosphoglycerate synthetase family.

It localises to the cytoplasm. The enzyme catalyses (2R)-2,3-bisphosphoglycerate + ATP + H(+) = cyclic (2R)-2,3-bisphosphoglycerate + ADP + phosphate. In terms of biological role, catalyzes the formation of cyclic 2,3-diphosphoglycerate (cDPG) by formation of an intramolecular phosphoanhydride bond at the expense of ATP. The protein is Cyclic 2,3-diphosphoglycerate synthetase of Thermococcus sibiricus (strain DSM 12597 / MM 739).